Consider the following 205-residue polypeptide: N-(5'-phosphoribosyl)anthranilate isomerase (205 aa).

It belongs to the TrpF family.

It carries out the reaction N-(5-phospho-beta-D-ribosyl)anthranilate = 1-(2-carboxyphenylamino)-1-deoxy-D-ribulose 5-phosphate. It participates in amino-acid biosynthesis; L-tryptophan biosynthesis; L-tryptophan from chorismate: step 3/5. This chain is N-(5'-phosphoribosyl)anthranilate isomerase, found in Thermotoga neapolitana (strain ATCC 49049 / DSM 4359 / NBRC 107923 / NS-E).